We begin with the raw amino-acid sequence, 187 residues long: Protein GrpE (187 aa).

Residues Met1–Asp22 are disordered. Residues Leu7–Asp22 show a composition bias toward low complexity.

This sequence belongs to the GrpE family. In terms of assembly, homodimer.

Its subcellular location is the cytoplasm. In terms of biological role, participates actively in the response to hyperosmotic and heat shock by preventing the aggregation of stress-denatured proteins, in association with DnaK and GrpE. It is the nucleotide exchange factor for DnaK and may function as a thermosensor. Unfolded proteins bind initially to DnaJ; upon interaction with the DnaJ-bound protein, DnaK hydrolyzes its bound ATP, resulting in the formation of a stable complex. GrpE releases ADP from DnaK; ATP binding to DnaK triggers the release of the substrate protein, thus completing the reaction cycle. Several rounds of ATP-dependent interactions between DnaJ, DnaK and GrpE are required for fully efficient folding. This is Protein GrpE from Pseudomonas syringae pv. tomato (strain ATCC BAA-871 / DC3000).